Consider the following 1364-residue polypeptide: Formin-like protein 6 (1364 aa).

A Phosphatase tensin-type domain is found at 9–193; the sequence is YRKPPDGLLE…HYISRRNVSA (185 aa). The Phosphocysteine intermediate role is filled by C126. The C2 tensin-type domain maps to 199–338; it reads DRALTLDCVI…FRAEVLFSEM (140 aa). Disordered stretches follow at residues 614–934, 976–999, and 1317–1364; these read KCTP…NLKP, VLPSSDGKRSDKSGSRASGSKPEK, and EAEA…ASAK. The segment covering 617–631 has biased composition (pro residues); that stretch reads PSPPPLLPPLAPVVP. Residues 657 to 690 are compositionally biased toward polar residues; it reads SFPSLSPTQQKQSTSKLCQTILPTNHQLSSSNIT. Pro residues predominate over residues 734-743; it reads PPAPPPPPLQ. The span at 744–757 shows a compositional bias: low complexity; that stretch reads SPSTPRCSPVRTLA. Composition is skewed to pro residues over residues 774-813 and 856-865; these read GPPPPPPPPAPNSCPSRPAPPPPPPPPLASTSSPPRPAAP and PSPPPPPPPC. Over residues 916–929 the composition is skewed to polar residues; sequence MSRSLQSGQAASRR. The FH2 domain occupies 922-1322; the sequence is SGQAASRRSN…KALKEAEAEK (401 aa). Residues 1317 to 1351 show a composition bias toward basic and acidic residues; it reads EAEAEKTKKEPENAQKTKEPGNDKAKHNNSIKELD. Residues 1353–1364 are compositionally biased toward polar residues; that stretch reads SLQSPAQTASAK.

It belongs to the formin-like family. Class-II subfamily.

In Oryza sativa subsp. japonica (Rice), this protein is Formin-like protein 6 (FH6).